A 385-amino-acid chain; its full sequence is Protein delta homolog 1 (385 aa).

Positions 1 to 23 (MIATGALLRVLLLLLAFGHSTYG) are cleaved as a signal peptide. 6 EGF-like domains span residues 24-55 (AECD…PLCD), 53-86 (LCDK…KFCE), 88-125 (DVRA…KDCQ), 127-168 (KAGP…NFCE), 172-208 (ATNS…KTCS), and 210-247 (PVSN…PTCA). Topologically, residues 24–305 (AECDPPCDPQ…KSTPLLTEGQ (282 aa)) are extracellular. 12 cysteine pairs are disulfide-bonded: C26–C37, C30–C43, C45–C54, C57–C68, C63–C74, C76–C85, C92–C103, C97–C113, C115–C124, C131–C144, C138–C156, and C158–C167. Residue S94 is glycosylated (O-linked (GalNAc...) serine). N100 is a glycosylation site (N-linked (GlcNAc...) asparagine). Residue N165 is glycosylated (N-linked (GlcNAc...) asparagine; atypical; partial). Residue N174 is glycosylated (N-linked (GlcNAc...) asparagine; atypical). 6 disulfides stabilise this stretch: C176–C187, C181–C196, C198–C207, C214–C225, C219–C235, and C237–C246. An O-linked (GalNAc...) serine glycan is attached at S216. The O-linked (GalNAc...) threonine glycan is linked to T224. T258 is a glycosylation site (O-linked (GalNAc...) threonine). Residue T267 is glycosylated (O-linked (GalNAc...) threonine; partial). A glycan (O-linked (GalNAc...) threonine) is linked at T271. The N-linked (GlcNAc...) asparagine glycan is linked to N295. A helical transmembrane segment spans residues 306–329 (AICFTILGVLTSLVVLGTVAIVFL). The Cytoplasmic portion of the chain corresponds to 330-385 (NKCETWVSNLRYNHTFRKKKNLLLQYNSGEELAVNIIFPEKIDMTTFNKEAGDEEI).

As to quaternary structure, monomer. Interacts with SH3RF2. Post-translationally, N- and O-glycosylated. As to expression, highly expressed in fetal liver, placenta, adult adrenal gland, brain, testis and ovary and, to a lesser degree, in adult kidney, muscle, thymus and heart.

The protein localises to the membrane. Its subcellular location is the cytoplasm. Its function is as follows. May have a role in neuroendocrine differentiation. Inhibits adipocyte differentiation. This Mus musculus (Mouse) protein is Protein delta homolog 1 (Dlk1).